A 188-amino-acid polypeptide reads, in one-letter code: MSICSDNWIIEKCLKEKMIEPFVDKQVRFENGEKIISYGVSSYGYDIRVSNQFQIFTNVYGSIVDPKQFDTKSLVKIEDDVCVIPPNSFALAITLEYFRIPENVLTICVGKSTYARCGIIVNVTPFEPGWEGYAVLEISNTTPLPAKIYAGEGIAQVLFFEGKEKCLYTYAARNGKYHRQMTLTLPLL.

DCTP contacts are provided by residues 111–116, 135–137, Gln-156, Tyr-170, and Gln-180; these read KSTYAR and VLE. The active-site Proton donor/acceptor is Glu-137.

It belongs to the dCTP deaminase family. In terms of assembly, homotrimer.

The enzyme catalyses dCTP + H2O + H(+) = dUTP + NH4(+). It participates in pyrimidine metabolism; dUMP biosynthesis; dUMP from dCTP (dUTP route): step 1/2. Catalyzes the deamination of dCTP to dUTP. This is dCTP deaminase from Protochlamydia amoebophila (strain UWE25).